Reading from the N-terminus, the 253-residue chain is Sulfate transporter CysZ (253 aa).

Transmembrane regions (helical) follow at residues phenylalanine 31–phenylalanine 51, leucine 75–isoleucine 95, isoleucine 151–tryptophan 171, and isoleucine 222–valine 242.

It belongs to the CysZ family.

It is found in the cell inner membrane. Its function is as follows. High affinity, high specificity proton-dependent sulfate transporter, which mediates sulfate uptake. Provides the sulfur source for the cysteine synthesis pathway. This chain is Sulfate transporter CysZ, found in Escherichia coli O81 (strain ED1a).